The primary structure comprises 448 residues: Multiple inositol polyphosphate phosphatase 1 (448 aa).

The signal sequence occupies residues 1–19 (MAPRRAACLLPLLVAVASA). Histidine 69 is a catalytic residue. Asparagine 203, asparagine 257, asparagine 409, and asparagine 441 each carry an N-linked (GlcNAc...) asparagine glycan. The Prevents secretion from ER signature appears at 445-448 (ADEL).

It belongs to the histidine acid phosphatase family. MINPP1 subfamily. N-glycosylated. Present in growth plate chondrocytes but not detectable in articular chondrocytes (at protein level). Spatially restricted to chondrocytes in the lower portion of the proliferative zone and the upper portion of the hypertrophic zone in the growth plate of long bones (at protein level). Weakly expressed in kidney, liver, lung, skin and spleen, and not detected in brain, heart and muscle.

It localises to the endoplasmic reticulum lumen. Its subcellular location is the secreted. It is found in the cell membrane. The enzyme catalyses 1D-myo-inositol hexakisphosphate + H2O = 1D-myo-inositol 1,2,4,5,6-pentakisphosphate + phosphate. It carries out the reaction 1D-myo-inositol 1,2,4,5,6-pentakisphosphate + H2O = 1D-myo-inositol 1,2,5,6-tetrakisphosphate + phosphate. The catalysed reaction is 1D-myo-inositol 1,2,5,6-tetrakisphosphate + H2O = 1D-myo-inositol 1,2,6-trisphosphate + phosphate. It catalyses the reaction 1D-myo-inositol 1,2,6-trisphosphate + H2O = 1D-myo-inositol 1,2-bisphosphate + phosphate. The enzyme catalyses 1D-myo-inositol 1,2-bisphosphate + H2O = 1D-myo-inositol 2-phosphate + phosphate. It carries out the reaction 1D-myo-inositol hexakisphosphate + H2O = 1D-myo-inositol 1,2,3,5,6-pentakisphosphate + phosphate. The catalysed reaction is 1D-myo-inositol 1,2,3,5,6-pentakisphosphate + H2O = 1D-myo-inositol 1,2,3,6-tetrakisphosphate + phosphate. It catalyses the reaction 1D-myo-inositol 1,2,3,6-tetrakisphosphate + H2O = 1D-myo-inositol 1,2,3-trisphosphate + phosphate. The enzyme catalyses 1D-myo-inositol 1,2,3-trisphosphate + H2O = 1D-myo-inositol 2,3-bisphosphate + phosphate. It carries out the reaction 1D-myo-inositol 2,3-bisphosphate + H2O = 1D-myo-inositol 2-phosphate + phosphate. The catalysed reaction is 1D-myo-inositol 1,3,4,5,6-pentakisphosphate + H2O = 1D-myo-inositol 1,4,5,6-tetrakisphosphate + phosphate. It catalyses the reaction 1D-myo-inositol 1,4,5,6-tetrakisphosphate + H2O = 1D-myo-inositol 1,4,5-trisphosphate + phosphate. The enzyme catalyses (2R)-2,3-bisphosphoglycerate + H2O = (2R)-2-phosphoglycerate + phosphate. Its function is as follows. Multiple inositol polyphosphate phosphatase that hydrolyzes 1D-myo-inositol 1,3,4,5,6-pentakisphosphate (InsP5[2OH]) and 1D-myo-inositol hexakisphosphate (InsP6) to a range of less phosphorylated inositol phosphates. This regulates the availability of these various small molecule second messengers and metal chelators which control many aspects of cell physiology. Has a weak in vitro activity towards 1D-myo-inositol 1,4,5-trisphosphate which is unlikely to be physiologically relevant. By regulating intracellular inositol polyphosphates pools, which act as metal chelators, it may control the availability of intracellular calcium and iron, which are important for proper neuronal development and homeostasis. May have a dual substrate specificity, and function as a 2,3-bisphosphoglycerate 3-phosphatase hydrolyzing 2,3-bisphosphoglycerate to 2-phosphoglycerate. 2,3-bisphosphoglycerate (BPG) is formed as part of the Rapoport-Luebering glycolytic bypass and is a regulator of systemic oxygen homeostasis as the major allosteric effector of hemoglobin. The protein is Multiple inositol polyphosphate phosphatase 1 (MINPP1) of Gallus gallus (Chicken).